The chain runs to 74 residues: Antimicrobial peptide ToAp1 (74 aa).

Residues methionine 1–alanine 22 form the signal peptide. Position 39 is a lysine amide (lysine 39). Residues glycine 40–tyrosine 74 constitute a propeptide that is removed on maturation.

This sequence belongs to the non-disulfide-bridged peptide (NDBP) superfamily. Short antimicrobial peptide (group 4) family. In terms of tissue distribution, expressed by the venom gland.

It is found in the secreted. Antimicrobial peptide. Is able to kill Mycobacterium abscessus subsp. massiliense in a dose-dependent manner. Has antifungal activity against Candida spp. and one Cryptococcus neoformans strains with MICs values ranging from 12.5 to 200 uM. Also shows an inhibitory activity on C.albicans biofilms at high concentrations. Shows low cytotoxic activity and has weak hemolytic activity on human erythrocytes. Shows anti-inflammatory activities, since it decreases release of pro-inflammatory cytokines, and increases release of anti-inflammatory cytokines. Acts by blocking the Toll-like receptor 4 (TLR4). In addition, decreases the expression of costimulatory molecules such as CD80 and CD86 in LPS-stimulated cells. In vivo, does not induce immune cell migration. Helical wheel projections predict an amphipathic peptide with distinct hydrophobic and hydrophilic faces. The polypeptide is Antimicrobial peptide ToAp1 (Tityus obscurus (Amazonian scorpion)).